Here is a 108-residue protein sequence, read N- to C-terminus: UPF0145 protein Npun_F4817 (108 aa).

This sequence belongs to the UPF0145 family.

The polypeptide is UPF0145 protein Npun_F4817 (Nostoc punctiforme (strain ATCC 29133 / PCC 73102)).